Here is a 272-residue protein sequence, read N- to C-terminus: 4-hydroxy-tetrahydrodipicolinate reductase (272 aa).

10–15 is a binding site for NAD(+); it reads GAAGRM. Arg-37 serves as a coordination point for NADP(+). NAD(+)-binding positions include 100-102 and 124-127; these read GTT and SGNM. His-157 acts as the Proton donor/acceptor in catalysis. His-158 lines the (S)-2,3,4,5-tetrahydrodipicolinate pocket. Lys-161 acts as the Proton donor in catalysis. 167–168 lines the (S)-2,3,4,5-tetrahydrodipicolinate pocket; it reads GT.

The protein belongs to the DapB family.

The protein resides in the cytoplasm. The enzyme catalyses (S)-2,3,4,5-tetrahydrodipicolinate + NAD(+) + H2O = (2S,4S)-4-hydroxy-2,3,4,5-tetrahydrodipicolinate + NADH + H(+). The catalysed reaction is (S)-2,3,4,5-tetrahydrodipicolinate + NADP(+) + H2O = (2S,4S)-4-hydroxy-2,3,4,5-tetrahydrodipicolinate + NADPH + H(+). It functions in the pathway amino-acid biosynthesis; L-lysine biosynthesis via DAP pathway; (S)-tetrahydrodipicolinate from L-aspartate: step 4/4. In terms of biological role, catalyzes the conversion of 4-hydroxy-tetrahydrodipicolinate (HTPA) to tetrahydrodipicolinate. The protein is 4-hydroxy-tetrahydrodipicolinate reductase of Methylocella silvestris (strain DSM 15510 / CIP 108128 / LMG 27833 / NCIMB 13906 / BL2).